Consider the following 208-residue polypeptide: Protein-L-isoaspartate O-methyltransferase (208 aa).

Ser59 is a catalytic residue.

It belongs to the methyltransferase superfamily. L-isoaspartyl/D-aspartyl protein methyltransferase family.

The protein localises to the cytoplasm. It carries out the reaction [protein]-L-isoaspartate + S-adenosyl-L-methionine = [protein]-L-isoaspartate alpha-methyl ester + S-adenosyl-L-homocysteine. Catalyzes the methyl esterification of L-isoaspartyl residues in peptides and proteins that result from spontaneous decomposition of normal L-aspartyl and L-asparaginyl residues. It plays a role in the repair and/or degradation of damaged proteins. The chain is Protein-L-isoaspartate O-methyltransferase from Salmonella paratyphi A (strain ATCC 9150 / SARB42).